Reading from the N-terminus, the 345-residue chain is Adenylosuccinate synthetase (345 aa).

Residues 18 to 24 (GDEGKGK) and 48 to 50 (GHT) contribute to the GTP site. Asp-19 acts as the Proton acceptor in catalysis. Positions 19 and 48 each coordinate Mg(2+). IMP contacts are provided by residues 19 to 22 (DEGK), 46 to 49 (NAGH), Thr-133, Arg-147, Gln-185, Thr-200, and Arg-262. His-49 serves as the catalytic Proton donor. A substrate-binding site is contributed by 258–264 (TVTGRRR). Residues Arg-264, 290–292 (GLD), and 330–332 (STG) each bind GTP.

The protein belongs to the adenylosuccinate synthetase family. Homodimer. It depends on Mg(2+) as a cofactor.

The protein resides in the cytoplasm. It carries out the reaction IMP + L-aspartate + GTP = N(6)-(1,2-dicarboxyethyl)-AMP + GDP + phosphate + 2 H(+). Its pathway is purine metabolism; AMP biosynthesis via de novo pathway; AMP from IMP: step 1/2. Plays an important role in the de novo pathway of purine nucleotide biosynthesis. Catalyzes the first committed step in the biosynthesis of AMP from IMP. The chain is Adenylosuccinate synthetase from Methanocaldococcus jannaschii (strain ATCC 43067 / DSM 2661 / JAL-1 / JCM 10045 / NBRC 100440) (Methanococcus jannaschii).